Reading from the N-terminus, the 67-residue chain is Protein SlyX homolog (67 aa).

This sequence belongs to the SlyX family.

This Thiobacillus denitrificans (strain ATCC 25259 / T1) protein is Protein SlyX homolog.